Consider the following 196-residue polypeptide: Small ribosomal subunit protein uS4c (196 aa).

Residues 15–43 (LGALPGLTRKTPKSGSNQKKKFHSGKKEQ) are disordered. One can recognise an S4 RNA-binding domain in the interval 89–150 (MRLDNILFRL…NQRSKRLVQN (62 aa)).

This sequence belongs to the universal ribosomal protein uS4 family. In terms of assembly, part of the 30S ribosomal subunit. Contacts protein S5. The interaction surface between S4 and S5 is involved in control of translational fidelity.

The protein resides in the plastid. The protein localises to the chloroplast. In terms of biological role, one of the primary rRNA binding proteins, it binds directly to 16S rRNA where it nucleates assembly of the body of the 30S subunit. Functionally, with S5 and S12 plays an important role in translational accuracy. The protein is Small ribosomal subunit protein uS4c (rps4) of Bothriochloa ischaemum (Yellow bluestem).